Here is a 122-residue protein sequence, read N- to C-terminus: Large ribosomal subunit protein uL14c (122 aa).

This sequence belongs to the universal ribosomal protein uL14 family. Part of the 50S ribosomal subunit.

It localises to the plastid. The protein localises to the chloroplast. Its function is as follows. Binds to 23S rRNA. This Angiopteris evecta (Mule's foot fern) protein is Large ribosomal subunit protein uL14c.